We begin with the raw amino-acid sequence, 264 residues long: Thymidylate synthase (264 aa).

Position 21 (arginine 21) interacts with dUMP. Histidine 51 contacts (6R)-5,10-methylene-5,6,7,8-tetrahydrofolate. Residue arginine 126–arginine 127 coordinates dUMP. Residue cysteine 146 is the Nucleophile of the active site. DUMP contacts are provided by residues arginine 166–aspartate 169, asparagine 177, and histidine 207–tyrosine 209. Aspartate 169 is a (6R)-5,10-methylene-5,6,7,8-tetrahydrofolate binding site. Alanine 263 lines the (6R)-5,10-methylene-5,6,7,8-tetrahydrofolate pocket.

It belongs to the thymidylate synthase family. Bacterial-type ThyA subfamily. As to quaternary structure, homodimer.

The protein localises to the cytoplasm. The catalysed reaction is dUMP + (6R)-5,10-methylene-5,6,7,8-tetrahydrofolate = 7,8-dihydrofolate + dTMP. The protein operates within pyrimidine metabolism; dTTP biosynthesis. Catalyzes the reductive methylation of 2'-deoxyuridine-5'-monophosphate (dUMP) to 2'-deoxythymidine-5'-monophosphate (dTMP) while utilizing 5,10-methylenetetrahydrofolate (mTHF) as the methyl donor and reductant in the reaction, yielding dihydrofolate (DHF) as a by-product. This enzymatic reaction provides an intracellular de novo source of dTMP, an essential precursor for DNA biosynthesis. The sequence is that of Thymidylate synthase from Xanthomonas axonopodis pv. citri (strain 306).